A 366-amino-acid chain; its full sequence is Transmembrane protein 25 (366 aa).

The first 26 residues, 1–26 (MALPPGPAALRHTLLLLPALLSSGWG), serve as a signal peptide directing secretion. The Extracellular segment spans residues 27–232 (ELEPQIDGQT…APGLLATRVE (206 aa)). An Ig-like domain is found at 30–123 (PQIDGQTWAE…SGRSANASVI (94 aa)). Cys-52 and Cys-107 are joined by a disulfide. 5 N-linked (GlcNAc...) asparagine glycosylation sites follow: Asn-106, Asn-162, Asn-175, Asn-192, and Asn-205. A helical transmembrane segment spans residues 233–253 (VPLLGIVVAAGLALGTLVGFS). At 254 to 366 (TLVACLVCRK…SSVSSDEIWL (113 aa)) the chain is on the cytoplasmic side. Positions 299-308 (PSNLQLNDLT) are enriched in polar residues. Residues 299–335 (PSNLQLNDLTPDSRAVKPADRQMAQNNSRPELLDPEP) are disordered.

In terms of assembly, interacts with GRIN2B. In terms of tissue distribution, expressed throughout the brain with higher levels in the pyramidal cell layer of the hippocampal CA1 and CA3 regions. Also highly expressed within the hippocampal dentate gyrus region and cerebellum and in scattered neurons in the cerebral cortex.

The protein resides in the cell membrane. It is found in the secreted. Its subcellular location is the late endosome. The protein localises to the lysosome. In neurons, modulates the degradation of NMDA receptor GRIN2B subunit. Plays a role in the regulation of neuronal excitability. In Homo sapiens (Human), this protein is Transmembrane protein 25 (TMEM25).